The chain runs to 346 residues: KH domain-containing, RNA-binding, signal transduction-associated protein 3 (346 aa).

Residues M1–N160 are involved in homodimerization. K4 is covalently cross-linked (Glycyl lysine isopeptide (Lys-Gly) (interchain with G-Cter in SUMO2)). The 67-residue stretch at L61–L127 folds into the KH domain. The segment at R212–P251 is interaction with SIAH1. Residues P213 to V228 are compositionally biased toward low complexity. 2 disordered regions span residues P213–G267 and Q318–Y346. Pro residues predominate over residues G253–T262.

Belongs to the KHDRBS family. As to quaternary structure, self-associates to form homooligomers; dimerization increases RNA affinity. Interacts with KHDRBS2/SLM-1. Interacts with KHDRBS1/SAM68; heterooligomer formation of KHDRBS family proteins may modulate RNA substrate specificity. Interacts with the splicing regulatory proteins SFRS9, SAFB and YTHDC1. Interacts with HNRPL. Interacts with RBMX, RBMY1A1, p85 subunit of PI3-kinase, SERPINB5. Interacts with SIAH1 which promotes targeting for degradation. Post-translationally, phosphorylated on tyrosine residues. Isoform 1 C-terminal region is tyrosine-rich, but isoform 2 lacking this C-terminal region is also tyrosine-phosphorylated. In terms of tissue distribution, ubiquitous with higher expression in testis, skeletal muscle and brain. Expressed in the kidney only in podocytes, the glomerular epithelial cells of the kidney. Strongly expressed after meiosis.

Its subcellular location is the nucleus. RNA-binding protein that plays a role in the regulation of alternative splicing and influences mRNA splice site selection and exon inclusion. Binds preferentially to the 5'-[AU]UAAA-3' motif in vitro. Binds optimally to RNA containing 5'-[AU]UAA-3' as a bipartite motif spaced by more than 15 nucleotides. Binds poly(A). RNA-binding abilities are down-regulated by tyrosine kinase PTK6. Involved in splice site selection of vascular endothelial growth factor. In vitro regulates CD44 alternative splicing by direct binding to purine-rich exonic enhancer. Can regulate alternative splicing of neurexins NRXN1-3 in the laminin G-like domain 6 containing the evolutionary conserved neurexin alternative spliced segment 4 (AS4) involved in neurexin selective targeting to postsynaptic partners such as neuroligins and LRRTM family members. Targeted, cell-type specific splicing regulation of NRXN1 at AS4 is involved in neuronal glutamatergic synapse function and plasticity. May regulate expression of KHDRBS2/SLIM-1 in defined brain neuron populations by modifying its alternative splicing. Can bind FABP9 mRNA. May play a role as a negative regulator of cell growth. Inhibits cell proliferation. In terms of biological role, (Microbial infection) Involved in post-transcriptional regulation of HIV-1 gene expression. This chain is KH domain-containing, RNA-binding, signal transduction-associated protein 3 (KHDRBS3), found in Homo sapiens (Human).